Here is a 272-residue protein sequence, read N- to C-terminus: ATP synthase subunit a (272 aa).

The next 5 helical transmembrane spans lie at 41–61 (VLNIDSMFFSVVLGLVFLVLF), 101–121 (VIAPLALTIFVWVFLMNFMDL), 147–167 (DVNITLSMALGVFVLILFYSI), 221–241 (LIFILIAGLLPWWSQWILSVP), and 243–263 (AIFHILIISLQAFIFMVLTIV).

It belongs to the ATPase A chain family. In terms of assembly, F-type ATPases have 2 components, CF(1) - the catalytic core - and CF(0) - the membrane proton channel. CF(1) has five subunits: alpha(3), beta(3), gamma(1), delta(1), epsilon(1). CF(0) has three main subunits: a(1), b(2) and c(9-12). The alpha and beta chains form an alternating ring which encloses part of the gamma chain. CF(1) is attached to CF(0) by a central stalk formed by the gamma and epsilon chains, while a peripheral stalk is formed by the delta and b chains.

The protein resides in the cell inner membrane. Key component of the proton channel; it plays a direct role in the translocation of protons across the membrane. This chain is ATP synthase subunit a, found in Erwinia tasmaniensis (strain DSM 17950 / CFBP 7177 / CIP 109463 / NCPPB 4357 / Et1/99).